The chain runs to 212 residues: Large ribosomal subunit protein uL4 (212 aa).

This sequence belongs to the universal ribosomal protein uL4 family. Part of the 50S ribosomal subunit.

Functionally, one of the primary rRNA binding proteins, this protein initially binds near the 5'-end of the 23S rRNA. It is important during the early stages of 50S assembly. It makes multiple contacts with different domains of the 23S rRNA in the assembled 50S subunit and ribosome. Forms part of the polypeptide exit tunnel. This chain is Large ribosomal subunit protein uL4, found in Phenylobacterium zucineum (strain HLK1).